A 916-amino-acid chain; its full sequence is Internalin J (916 aa).

The N-terminal stretch at Met1 to Ala25 is a signal peptide. LRR repeat units lie at residues Thr94–Thr115, Gly116–Thr136, Asn137–Thr157, Lys158–Leu179, Leu180–Gln200, Leu201–Thr221, Gln222–Leu243, Leu244–Ile263, Gln264–Thr284, Gln285–Lys306, Asp316–Asn325, Lys338–Ala357, Gly359–Asn368, and Glu380–Ile402. MucBP domains are found at residues Pro506–Val568, Ile576–Val638, Ile646–Val708, Ala717–Val779, and Ile787–Val849. The interval Pro862–Lys888 is disordered. An LPXTG sorting signal motif is present at residues Leu886 to Gly890. At Thr889 the chain carries Pentaglycyl murein peptidoglycan amidated threonine. Positions Gly890 to Lys916 are cleaved as a propeptide — removed by sortase.

Belongs to the internalin family.

Its subcellular location is the secreted. It localises to the cell wall. Its function is as follows. Involved in several steps of L.monocytogenes infection, probably improves adhesin to host cells. This Listeria monocytogenes serotype 4b (strain F2365) protein is Internalin J (inlJ).